A 332-amino-acid chain; its full sequence is Galectin-4 (332 aa).

Galectin domains follow at residues 19-150 (YHNP…INFI) and 203-332 (FNGR…YVQI). Residue 265-271 (WGSEERK) coordinates a beta-D-galactoside. Ser-267 carries the post-translational modification Phosphoserine.

In terms of assembly, monomer.

Its function is as follows. Galectin that binds lactose and a related range of sugars. May be involved in the assembly of adherens junctions. The sequence is that of Galectin-4 (LGALS4) from Bos taurus (Bovine).